A 103-amino-acid polypeptide reads, in one-letter code: RNA-binding protein YlxQ (103 aa).

Belongs to the eukaryotic ribosomal protein eL8 family.

RNA-binding protein that recognizes the K-turn motif present in ribosomal RNA, but also in box C/D and box C'/D' sRNAs. In Enterococcus faecium (Streptococcus faecium), this protein is RNA-binding protein YlxQ.